The following is a 520-amino-acid chain: NAD(P)H-quinone oxidoreductase subunit 2 (520 aa).

14 helical membrane-spanning segments follow: residues 15–35, 42–62, 79–99, 106–126, 132–152, 167–187, 210–230, 244–264, 280–300, 306–326, 334–354, 378–398, 400–420, and 466–486; these read ILPE…DLIL, WIGY…YFQW, LSII…LMSI, GTAL…GMFV, LVMI…LTGY, LLIG…LYGL, LGAV…ISAA, PTPV…ALAI, FVFT…ALAQ, MLAY…IAGT, IFYL…IILF, LGLS…GFFG, IYLF…LGLV, and VGLV…NPLF.

The protein belongs to the complex I subunit 2 family. As to quaternary structure, NDH-1 can be composed of about 15 different subunits; different subcomplexes with different compositions have been identified which probably have different functions.

The protein localises to the cellular thylakoid membrane. It carries out the reaction a plastoquinone + NADH + (n+1) H(+)(in) = a plastoquinol + NAD(+) + n H(+)(out). The catalysed reaction is a plastoquinone + NADPH + (n+1) H(+)(in) = a plastoquinol + NADP(+) + n H(+)(out). Its function is as follows. NDH-1 shuttles electrons from an unknown electron donor, via FMN and iron-sulfur (Fe-S) centers, to quinones in the respiratory and/or the photosynthetic chain. The immediate electron acceptor for the enzyme in this species is believed to be plastoquinone. Couples the redox reaction to proton translocation, and thus conserves the redox energy in a proton gradient. Cyanobacterial NDH-1 also plays a role in inorganic carbon-concentration. The polypeptide is NAD(P)H-quinone oxidoreductase subunit 2 (Nostoc sp. (strain PCC 7120 / SAG 25.82 / UTEX 2576)).